Here is a 93-residue protein sequence, read N- to C-terminus: MARSLKKGPFVDDHVMKKVIAAKKVNDGKPIKTWSRRSTIIPDMIGLTFNVHNGKSFIPVYITENHIGYKLGEFAPTRTFKGHKGSVQKKIGK.

The protein belongs to the universal ribosomal protein uS19 family.

In terms of biological role, protein S19 forms a complex with S13 that binds strongly to the 16S ribosomal RNA. The sequence is that of Small ribosomal subunit protein uS19 from Campylobacter lari (strain RM2100 / D67 / ATCC BAA-1060).